The chain runs to 64 residues: Translation machinery-associated protein 7B (64 aa).

Positions 1-38 are disordered; it reads MSSHEGGKKKALKQPKKQAKEMDEEEKAFKQKQKEEQK. Positions 27-38 are enriched in basic and acidic residues; it reads KAFKQKQKEEQK.

The protein belongs to the TMA7 family.

In Homo sapiens (Human), this protein is Translation machinery-associated protein 7B.